The following is a 348-amino-acid chain: D-alanine--D-alanine ligase (348 aa).

Residues 132 to 334 enclose the ATP-grasp domain; sequence KQVLATVGVP…YSDLIEKLVM (203 aa). Residue 162–217 participates in ATP binding; it reads LETLSFPIFVKPANMGSSVGISKATDESSLRSAIDLALKYDSRILIEQGVTAREIE. Residues Asp-288, Glu-301, and Asn-303 each coordinate Mg(2+).

This sequence belongs to the D-alanine--D-alanine ligase family. Mg(2+) is required as a cofactor. It depends on Mn(2+) as a cofactor.

The protein localises to the cytoplasm. The enzyme catalyses 2 D-alanine + ATP = D-alanyl-D-alanine + ADP + phosphate + H(+). The protein operates within cell wall biogenesis; peptidoglycan biosynthesis. Functionally, cell wall formation. The chain is D-alanine--D-alanine ligase from Streptococcus agalactiae serotype Ia (strain ATCC 27591 / A909 / CDC SS700).